The chain runs to 382 residues: D-galactonate dehydratase (382 aa).

Aspartate 183 serves as a coordination point for Mg(2+). Histidine 185 acts as the Proton donor in catalysis. Mg(2+) contacts are provided by glutamate 209 and glutamate 235. The active-site Proton acceptor is the histidine 285.

This sequence belongs to the mandelate racemase/muconate lactonizing enzyme family. GalD subfamily. Requires Mg(2+) as cofactor.

It carries out the reaction D-galactonate = 2-dehydro-3-deoxy-D-galactonate + H2O. The protein operates within carbohydrate acid metabolism; D-galactonate degradation; D-glyceraldehyde 3-phosphate and pyruvate from D-galactonate: step 1/3. Its function is as follows. Catalyzes the dehydration of D-galactonate to 2-keto-3-deoxy-D-galactonate. The chain is D-galactonate dehydratase from Xanthomonas campestris pv. campestris (strain 8004).